The primary structure comprises 137 residues: Small ribosomal subunit protein uS9 (137 aa).

Residues 105 to 137 (LKAEGYLTRDPRAKERKKYGLHKARKAPQYSKR) form a disordered region. The segment covering 118–137 (KERKKYGLHKARKAPQYSKR) has biased composition (basic residues).

Belongs to the universal ribosomal protein uS9 family.

In Synechocystis sp. (strain ATCC 27184 / PCC 6803 / Kazusa), this protein is Small ribosomal subunit protein uS9 (rpsI).